We begin with the raw amino-acid sequence, 617 residues long: Proline--tRNA ligase (617 aa).

Belongs to the class-II aminoacyl-tRNA synthetase family. ProS type 1 subfamily. In terms of assembly, homodimer.

Its subcellular location is the cytoplasm. It carries out the reaction tRNA(Pro) + L-proline + ATP = L-prolyl-tRNA(Pro) + AMP + diphosphate. In terms of biological role, catalyzes the attachment of proline to tRNA(Pro) in a two-step reaction: proline is first activated by ATP to form Pro-AMP and then transferred to the acceptor end of tRNA(Pro). As ProRS can inadvertently accommodate and process non-cognate amino acids such as alanine and cysteine, to avoid such errors it has two additional distinct editing activities against alanine. One activity is designated as 'pretransfer' editing and involves the tRNA(Pro)-independent hydrolysis of activated Ala-AMP. The other activity is designated 'posttransfer' editing and involves deacylation of mischarged Ala-tRNA(Pro). The misacylated Cys-tRNA(Pro) is not edited by ProRS. The polypeptide is Proline--tRNA ligase (Streptococcus pneumoniae (strain Hungary19A-6)).